Reading from the N-terminus, the 226-residue chain is High affinity heme transporter (226 aa).

The N-terminal stretch at 1-20 (MISLKIYFVLIFLFLKGINS) is a signal peptide. Positions 72–101 (CDTTILSETNNVTGSCYVANCANDTVLEIC) are heme binding. The GPI-anchor amidated serine moiety is linked to residue Ser-199. Residues 200–226 (SASSTIFKPSYFISCLLSVGLYLVLNF) constitute a propeptide, removed in mature form.

The protein localises to the cell membrane. It localises to the vacuole membrane. Its function is as follows. High affinity heme transporter involved in the assimilation of exogenous heme during conditions of low cellular iron. The sequence is that of High affinity heme transporter from Schizosaccharomyces pombe (strain 972 / ATCC 24843) (Fission yeast).